The primary structure comprises 73 residues: DNA-directed RNA polymerase subunit epsilon (73 aa).

The protein belongs to the RNA polymerase subunit epsilon family. In terms of assembly, RNAP is composed of a core of 2 alpha, a beta and a beta' subunit. The core is associated with a delta subunit, and at least one of epsilon or omega. When a sigma factor is associated with the core the holoenzyme is formed, which can initiate transcription.

It carries out the reaction RNA(n) + a ribonucleoside 5'-triphosphate = RNA(n+1) + diphosphate. Its function is as follows. A non-essential component of RNA polymerase (RNAP). This chain is DNA-directed RNA polymerase subunit epsilon, found in Lactobacillus helveticus (strain DPC 4571).